A 127-amino-acid chain; its full sequence is Acetylcholine receptor subunit alpha (127 aa).

Topologically, residues 1–127 (ADGIFAIDQF…YFIVNVIIPC (127 aa)) are extracellular. Cys33 and Cys47 form a disulfide bridge. 2 N-linked (GlcNAc...) asparagine glycosylation sites follow: Asn46 and Asn94. A disulfide bridge connects residues Cys97 and Cys98.

This sequence belongs to the ligand-gated ion channel (TC 1.A.9) family. Acetylcholine receptor (TC 1.A.9.1) subfamily. Alpha-1/CHRNA1 sub-subfamily. One of the alpha chains that assemble within the acetylcholine receptor, a pentamer of two alpha chains, a beta, a delta, and a gamma or epsilon chains.

The protein resides in the postsynaptic cell membrane. The protein localises to the cell membrane. It carries out the reaction K(+)(in) = K(+)(out). The enzyme catalyses Na(+)(in) = Na(+)(out). In terms of biological role, upon acetylcholine binding, the AChR responds by an extensive change in conformation that affects all subunits and leads to opening of an ion-conducting channel across the plasma membrane. Does not bind alpha-bungarotoxin. The sequence is that of Acetylcholine receptor subunit alpha (CHRNA1) from Natrix tessellata (Dice snake).